Consider the following 386-residue polypeptide: Diaminopimelate decarboxylase (386 aa).

An N6-(pyridoxal phosphate)lysine modification is found at Lys-46. Pyridoxal 5'-phosphate contacts are provided by residues Gly-214 and 246-249; that span reads EIGR. Residues Arg-249, Arg-285, and Tyr-289 each coordinate substrate. Cys-314 acts as the Proton donor in catalysis. Residues Glu-315 and Tyr-343 each coordinate substrate. Tyr-343 contributes to the pyridoxal 5'-phosphate binding site.

Belongs to the Orn/Lys/Arg decarboxylase class-II family. LysA subfamily. As to quaternary structure, homodimer. Pyridoxal 5'-phosphate serves as cofactor.

It catalyses the reaction meso-2,6-diaminopimelate + H(+) = L-lysine + CO2. It functions in the pathway amino-acid biosynthesis; L-lysine biosynthesis via DAP pathway; L-lysine from DL-2,6-diaminopimelate: step 1/1. Its function is as follows. Specifically catalyzes the decarboxylation of meso-diaminopimelate (meso-DAP) to L-lysine. This chain is Diaminopimelate decarboxylase, found in Thermotoga maritima (strain ATCC 43589 / DSM 3109 / JCM 10099 / NBRC 100826 / MSB8).